Consider the following 225-residue polypeptide: DNA repair and recombination protein RadB (225 aa).

Belongs to the eukaryotic RecA-like protein family. RadB subfamily.

Involved in DNA repair and in homologous recombination. May regulate the cleavage reactions of the branch-structured DNA. Has a very weak ATPase activity that is not stimulated by DNA. Binds DNA but does not promote DNA strands exchange. The protein is DNA repair and recombination protein RadB of Methanococcoides burtonii (strain DSM 6242 / NBRC 107633 / OCM 468 / ACE-M).